The following is a 175-amino-acid chain: tRNA-specific adenosine deaminase 2 (175 aa).

Residues 8-133 (EEIQNWMHKA…SVLNVSGDDI (126 aa)) form the CMP/dCMP-type deaminase domain. Residue His59 participates in Zn(2+) binding. The active-site Proton donor is Glu61. Residues Cys95 and Cys98 each contribute to the Zn(2+) site.

The protein belongs to the cytidine and deoxycytidylate deaminase family. ADAT2 subfamily. Zn(2+) serves as cofactor.

The enzyme catalyses adenosine(34) in tRNA + H2O + H(+) = inosine(34) in tRNA + NH4(+). In terms of biological role, probably participates in deamination of adenosine-34 to inosine in many tRNAs. This is tRNA-specific adenosine deaminase 2 (adat2) from Xenopus laevis (African clawed frog).